Reading from the N-terminus, the 902-residue chain is U3 small nucleolar RNA-associated protein 21 homolog (902 aa).

WD repeat units lie at residues 40–71 (DIEARGTHFLVTTSVGNTFQTYDCEKLNLLFV), 80–110 (TCLKSFKDFMLVAAGSKIFAYKRGKIIWDID), 119–154 (THLDAFGEWIIACTSSRHVYVWKHASKYSVPELHTT), 164–198 (TSLLHPSTYLNKILLGFSDGALQIWNLRVSKRVHE), 206–243 (GITSLTQAPVLDVLAVGTISGRIVIFNLKNGSILMEFK), 249–284 (LSCSFRTDGTPILASSNPIGDLSFWDLSKRRIQNVT), 289–332 (FGSL…RSRN), 339–373 (SFVKFYGKSVHFLISAATDRSLRAVSLYQDSQSTE), 399–438 (TALSSSNTREKYWDNVLTAHKNDSSARTWNWKSKTLGQHV), 447–481 (VRSVCVSCCGNFGLIGSSKGVVDVYNMQSGIKRKS), 492–528 (VTAVMLDNVNRILVTASLDGILKFWDFNKGNLIDSLD), 533–568 (ITHAIYQHSSDLVAVACDDFGIRIVDVQTRKIVREL), 570–611 (GHSN…DSIS), and 613–651 (PSVCTSLTFAPTGDYLATTHVDQVGISLWTNLSMFKHVS).

As to quaternary structure, interacts with snoRNA U3. Interacts with MPP10. Component of the ribosomal small subunit (SSU) processome composed of at least 40 protein subunits and snoRNA U3.

It is found in the nucleus. Its subcellular location is the nucleolus. Involved in nucleolar processing of pre-18S ribosomal RNA and ribosome assembly. In Schizosaccharomyces pombe (strain 972 / ATCC 24843) (Fission yeast), this protein is U3 small nucleolar RNA-associated protein 21 homolog.